Consider the following 164-residue polypeptide: S-ribosylhomocysteine lyase (164 aa).

Positions 61, 65, and 131 each coordinate Fe cation.

The protein belongs to the LuxS family. As to quaternary structure, homodimer. Requires Fe cation as cofactor.

The catalysed reaction is S-(5-deoxy-D-ribos-5-yl)-L-homocysteine = (S)-4,5-dihydroxypentane-2,3-dione + L-homocysteine. Functionally, involved in the synthesis of autoinducer 2 (AI-2) which is secreted by bacteria and is used to communicate both the cell density and the metabolic potential of the environment. The regulation of gene expression in response to changes in cell density is called quorum sensing. Catalyzes the transformation of S-ribosylhomocysteine (RHC) to homocysteine (HC) and 4,5-dihydroxy-2,3-pentadione (DPD). The protein is S-ribosylhomocysteine lyase of Bifidobacterium longum (strain NCC 2705).